The following is a 345-amino-acid chain: Aspartate--ammonia ligase (345 aa).

The protein belongs to the class-II aminoacyl-tRNA synthetase family. AsnA subfamily.

The protein resides in the cytoplasm. It carries out the reaction L-aspartate + NH4(+) + ATP = L-asparagine + AMP + diphosphate + H(+). It participates in amino-acid biosynthesis; L-asparagine biosynthesis; L-asparagine from L-aspartate (ammonia route): step 1/1. The sequence is that of Aspartate--ammonia ligase from Bacteroides thetaiotaomicron (strain ATCC 29148 / DSM 2079 / JCM 5827 / CCUG 10774 / NCTC 10582 / VPI-5482 / E50).